The sequence spans 409 residues: Elongation factor Tu, chloroplastic (409 aa).

One can recognise a tr-type G domain in the interval Lys10–Glu214. Residues Gly19–Thr26 are G1. Gly19–Thr26 contacts GTP. Thr26 provides a ligand contact to Mg(2+). Positions Gly60 to Asn64 are G2. The interval Asp81–Gly84 is G3. Residues Asp81–His85 and Asn136–Asp139 each bind GTP. The interval Asn136–Asp139 is G4. A G5 region spans residues Ser174–Leu176.

It belongs to the TRAFAC class translation factor GTPase superfamily. Classic translation factor GTPase family. EF-Tu/EF-1A subfamily.

Its subcellular location is the plastid. It localises to the chloroplast. It carries out the reaction GTP + H2O = GDP + phosphate + H(+). GTP hydrolase that promotes the GTP-dependent binding of aminoacyl-tRNA to the A-site of ribosomes during protein biosynthesis. The chain is Elongation factor Tu, chloroplastic (tufA) from Phaeodactylum tricornutum (strain CCAP 1055/1).